The primary structure comprises 429 residues: Glutamate-1-semialdehyde 2,1-aminomutase 1 (429 aa).

Lys-267 carries the post-translational modification N6-(pyridoxal phosphate)lysine.

The protein belongs to the class-III pyridoxal-phosphate-dependent aminotransferase family. HemL subfamily. As to quaternary structure, homodimer. Pyridoxal 5'-phosphate is required as a cofactor.

It is found in the cytoplasm. It catalyses the reaction (S)-4-amino-5-oxopentanoate = 5-aminolevulinate. It participates in porphyrin-containing compound metabolism; protoporphyrin-IX biosynthesis; 5-aminolevulinate from L-glutamyl-tRNA(Glu): step 2/2. The protein is Glutamate-1-semialdehyde 2,1-aminomutase 1 of Bacillus velezensis (strain DSM 23117 / BGSC 10A6 / LMG 26770 / FZB42) (Bacillus amyloliquefaciens subsp. plantarum).